A 655-amino-acid chain; its full sequence is SRSF protein kinase 1 (655 aa).

Positions 1–57 are disordered; the sequence is MERKVLALQARKKRTKAKKDKAQRKSETQHRGSAPHSESDLPEQEEEILGSDDDEQE. The span at 10-22 shows a compositional bias: basic residues; the sequence is ARKKRTKAKKDKA. The span at 40 to 57 shows a compositional bias: acidic residues; it reads DLPEQEEEILGSDDDEQE. S51 is modified (phosphoserine; by CK2). Residues 80 to 653 form the Protein kinase domain; that stretch reads YHVIRKLGWG…AAECLRHPWL (574 aa). Residues 86–94, K109, and 166–168 each bind ATP; these read LGWGHFSTV and EVL. D213 (proton acceptor) is an active-site residue. Disordered stretches follow at residues 238–341 and 397–417; these read WQRS…QDQT and FLSSQNGDSSTSQETDSCTPI. Positions 265–276 are enriched in basic residues; sequence KNKKKKLKKKQK. Composition is skewed to basic and acidic residues over residues 277–288 and 304–318; these read RQAELLEKRMQE and NKQEESESPVERPLK. A phosphoserine mark is found at S309, S311, and S333. A Phosphoserine; by CK2 modification is found at S555.

It belongs to the protein kinase superfamily. CMGC Ser/Thr protein kinase family. Monomer. Isoform 2 is found in a multisubunit complex containing seven proteins, named toposome, which separates entangled circular chromatin DNA during chromosome segregation. Isoform 2 interacts with DNAJC8 and AHSA1/AHA1 and this mediates formation of a complex with the Hsp70 /Hsp90 machinery. Isoform 1 is found in a complex with: DHX9, MOV10, MATR3, HNRNPU, NCL, DDX21, HSD17B4, PABPC1, HNRNPM, IGF2BP1, SYNCRIP, RPL3, VIM, YBX1, NPM1, HNRNPA2B1, HNRNPC, RPLP0, RPL7A and RALY. Isoform 2 binds to IGF2BP1, SYNCRIP, HNRNPA2B1 and HNRNPC. Isoform 1 and isoform 2 interact with SAFB which inhibits its activity. Isoform 2 interacts with SAFB2 which inhibits its activity. In terms of assembly, (Microbial infection) Isoform 2 interacts with HHV-1 ICP27 protein. Requires Mg(2+) as cofactor. Isoform 2 is predominantly expressed in the testis but is also present at lower levels in heart, ovary, small intestine, liver, kidney, pancreas and skeletal muscle. Isoform 1 is only seen in the testis, at lower levels than isoform 2. Highly expressed in different erythroid and lymphoid cell lines, with isoform 2 being far more abundant than isoform 1.

The protein resides in the cytoplasm. It is found in the nucleus. The protein localises to the nucleus matrix. It localises to the microsome. Its subcellular location is the nucleoplasm. The protein resides in the nucleus speckle. It is found in the chromosome. It catalyses the reaction L-seryl-[protein] + ATP = O-phospho-L-seryl-[protein] + ADP + H(+). It carries out the reaction L-threonyl-[protein] + ATP = O-phospho-L-threonyl-[protein] + ADP + H(+). With respect to regulation, activated by phosphorylation on Ser-51 and Ser-555. In terms of biological role, serine/arginine-rich protein-specific kinase which specifically phosphorylates its substrates at serine residues located in regions rich in arginine/serine dipeptides, known as RS domains and is involved in the phosphorylation of SR splicing factors and the regulation of splicing. Plays a central role in the regulatory network for splicing, controlling the intranuclear distribution of splicing factors in interphase cells and the reorganization of nuclear speckles during mitosis. Can influence additional steps of mRNA maturation, as well as other cellular activities, such as chromatin reorganization in somatic and sperm cells and cell cycle progression. Isoform 2 phosphorylates SFRS2, ZRSR2, LBR and PRM1. Isoform 2 phosphorylates SRSF1 using a directional (C-terminal to N-terminal) and a dual-track mechanism incorporating both processive phosphorylation (in which the kinase stays attached to the substrate after each round of phosphorylation) and distributive phosphorylation steps (in which the kinase and substrate dissociate after each phosphorylation event). The RS domain of SRSF1 binds first to a docking groove in the large lobe of the kinase domain of SRPK1. This induces certain structural changes in SRPK1 and/or RRM2 domain of SRSF1, allowing RRM2 to bind the kinase and initiate phosphorylation. The cycles continue for several phosphorylation steps in a processive manner (steps 1-8) until the last few phosphorylation steps (approximately steps 9-12). During that time, a mechanical stress induces the unfolding of the beta-4 motif in RRM2, which then docks at the docking groove of SRPK1. This also signals RRM2 to begin to dissociate, which facilitates SRSF1 dissociation after phosphorylation is completed. Isoform 2 can mediate hepatitis B virus (HBV) core protein phosphorylation. It plays a negative role in the regulation of HBV replication through a mechanism not involving the phosphorylation of the core protein but by reducing the packaging efficiency of the pregenomic RNA (pgRNA) without affecting the formation of the viral core particles. Isoform 1 and isoform 2 can induce splicing of exon 10 in MAPT/TAU. The ratio of isoform 1/isoform 2 plays a decisive role in determining cell fate in K-562 leukaemic cell line: isoform 2 favors proliferation where as isoform 1 favors differentiation. The polypeptide is SRSF protein kinase 1 (Homo sapiens (Human)).